The sequence spans 294 residues: MNTGEYNKLGSAIEEVSRGQLGRWECYKQRLFFLVLALLVATVLWALILSTLLSSASSKLRVLLSHQDLLRTNASEQKMTLSSLKDDIGACRNCCSVTKAQLQTTLAEFKDIQAKLMEQESILKELQERVTQDLAKASRDRENIRSELFQALEAVKRQNSSCEQCPPSWLPFQGSCYYFSETQATWDTAQSYCGGQGAHLVIVRGLNEQGFLSQHTRGRGYWLGLRAVRHLNKIQGYRWVDGASLNFSHWNSGEPNDSRGHEDCIMMLHSGLWNDAPCTNERDGWICEKRSSCY.

Residues 1 to 30 (MNTGEYNKLGSAIEEVSRGQLGRWECYKQR) lie on the Cytoplasmic side of the membrane. A helical; Signal-anchor for type II membrane protein transmembrane segment spans residues 31–51 (LFFLVLALLVATVLWALILST). Residues 52-294 (LLSSASSKLR…WICEKRSSCY (243 aa)) are Extracellular-facing. N73 is a glycosylation site (N-linked (GlcNAc...) asparagine). Residues 100 to 151 (AQLQTTLAEFKDIQAKLMEQESILKELQERVTQDLAKASRDRENIRSELFQA) adopt a coiled-coil conformation. N159, N246, and N256 each carry an N-linked (GlcNAc...) asparagine glycan. Positions 172–287 (FQGSCYYFSE…CTNERDGWIC (116 aa)) constitute a C-type lectin domain. The cysteines at positions 264 and 278 are disulfide-linked.

The protein localises to the cell membrane. Binds mannose, N-acetylglucosamine (GlcNAc) and fucose, but not galactose, in a Ca(2+)-dependent manner. The polypeptide is C-type lectin domain family 4 member G (Clec4g) (Mus musculus (Mouse)).